A 421-amino-acid polypeptide reads, in one-letter code: O-glycoside alpha-1,2-mannosyltransferase homolog 5 (421 aa).

Glutamate 318 functions as the Nucleophile in the catalytic mechanism.

The protein belongs to the glycosyltransferase 15 family.

The protein localises to the cytoplasm. In terms of biological role, probable mannosyltransferase involved in O-glycosylation of cell wall and secreted proteins. In Schizosaccharomyces pombe (strain 972 / ATCC 24843) (Fission yeast), this protein is O-glycoside alpha-1,2-mannosyltransferase homolog 5 (omh5).